The sequence spans 216 residues: Small ribosomal subunit protein uS3 (216 aa).

The KH type-2 domain occupies 24–93 (IKEFLEYRLA…NPQIDVIDVS (70 aa)).

It belongs to the universal ribosomal protein uS3 family. As to quaternary structure, part of the 30S ribosomal subunit.

Binds the lower part of the 30S subunit head. This Pyrobaculum calidifontis (strain DSM 21063 / JCM 11548 / VA1) protein is Small ribosomal subunit protein uS3.